The sequence spans 394 residues: Homoserine O-succinyltransferase (394 aa).

One can recognise an AB hydrolase-1 domain in the interval 54–368 (NAVLICHALS…SSPAGHDAFL (315 aa)). S160 (nucleophile) is an active-site residue. Substrate is bound at residue R236. Residues D331 and H364 contribute to the active site. Substrate is bound at residue D365.

Belongs to the AB hydrolase superfamily. MetX family. Homodimer.

It is found in the cytoplasm. It catalyses the reaction L-homoserine + succinyl-CoA = O-succinyl-L-homoserine + CoA. It functions in the pathway amino-acid biosynthesis; L-methionine biosynthesis via de novo pathway; O-succinyl-L-homoserine from L-homoserine: step 1/1. In terms of biological role, transfers a succinyl group from succinyl-CoA to L-homoserine, forming succinyl-L-homoserine. The sequence is that of Homoserine O-succinyltransferase from Magnetococcus marinus (strain ATCC BAA-1437 / JCM 17883 / MC-1).